Consider the following 98-residue polypeptide: NADH-ubiquinone oxidoreductase chain 4L (98 aa).

3 consecutive transmembrane segments (helical) span residues 1-21, 25-45, and 57-79; these read MLAI…GVLV, HLMS…ILMT, and SMAP…ALLV.

The protein belongs to the complex I subunit 4L family. Core subunit of respiratory chain NADH dehydrogenase (Complex I) which is composed of 45 different subunits.

The protein resides in the mitochondrion inner membrane. The enzyme catalyses a ubiquinone + NADH + 5 H(+)(in) = a ubiquinol + NAD(+) + 4 H(+)(out). Its function is as follows. Core subunit of the mitochondrial membrane respiratory chain NADH dehydrogenase (Complex I) which catalyzes electron transfer from NADH through the respiratory chain, using ubiquinone as an electron acceptor. Part of the enzyme membrane arm which is embedded in the lipid bilayer and involved in proton translocation. The protein is NADH-ubiquinone oxidoreductase chain 4L (MT-ND4L) of Dasyurus hallucatus (Northern quoll).